We begin with the raw amino-acid sequence, 298 residues long: MQLEKMITEGSNAASAEIDRVSTLEMCRIINDEDKTVPLAVERVLPDIAAAIDVIHAQVSGGGRLIYLGAGTSGRLGILDASECPPTYGVKPGLVVGLIAGGEYAIQHAVEGAEDSREGGINDLKNIGLTAQDVVVGIAASGRTPYVIAGLEYARQLGCRTVGISCNPGSAVSTTAEFAITPVVGAEVVTGSSRMKAGTAQKLVLNMLSTGLMIKSGKVFGNLMVDVVATNEKLHVRQVNIVKNATGCNAEQAEAALIACERNCKTAIVMVLKNLDAAEAKKRLDQHGGFIRQVLDKE.

The 164-residue stretch at 55–218 folds into the SIS domain; the sequence is IHAQVSGGGR…STGLMIKSGK (164 aa). Catalysis depends on glutamate 83, which acts as the Proton donor. The active site involves glutamate 114.

It belongs to the GCKR-like family. MurNAc-6-P etherase subfamily. Homodimer.

It carries out the reaction N-acetyl-D-muramate 6-phosphate + H2O = N-acetyl-D-glucosamine 6-phosphate + (R)-lactate. Its pathway is amino-sugar metabolism; 1,6-anhydro-N-acetylmuramate degradation. The protein operates within amino-sugar metabolism; N-acetylmuramate degradation. It functions in the pathway cell wall biogenesis; peptidoglycan recycling. Functionally, specifically catalyzes the cleavage of the D-lactyl ether substituent of MurNAc 6-phosphate, producing GlcNAc 6-phosphate and D-lactate. Together with AnmK, is also required for the utilization of anhydro-N-acetylmuramic acid (anhMurNAc) either imported from the medium or derived from its own cell wall murein, and thus plays a role in cell wall recycling. The sequence is that of N-acetylmuramic acid 6-phosphate etherase from Shigella dysenteriae serotype 1 (strain Sd197).